Consider the following 688-residue polypeptide: Glycine--tRNA ligase beta subunit (688 aa).

It belongs to the class-II aminoacyl-tRNA synthetase family. Tetramer of two alpha and two beta subunits.

It localises to the cytoplasm. The catalysed reaction is tRNA(Gly) + glycine + ATP = glycyl-tRNA(Gly) + AMP + diphosphate. The chain is Glycine--tRNA ligase beta subunit from Geotalea uraniireducens (strain Rf4) (Geobacter uraniireducens).